The primary structure comprises 606 residues: MTVLGHPRSWSCRWWPLLLLLLLTGREPGVEGVTHYKAGDPVILYVNKVGPYHNPQETYHYYQLPVCCPEKIRHKSLSLGEVLDGDRMAESLYEIRFRENVEKRVLCHMQLSSAQVEQLRQAIEELYYFEFVVDDLPIRGFVGYMEESGFLPHSHKIGLWTHLDFHLEFHGDRIIFANVSVRDVKPHSLDGLRPDEFLGLTHTYSVRWSETSVERRSDRRRGDDGGFFPRTLEIHWLSIINSMVLVFLLVGFVAVILMRVLRNDLARYNLDEETASAGSGDDFDQSDNGWKIIHTDVFRFPPYRGLLCAVLGVGAQFLALGTGIIVMALLGMFNVHRHGAINSAAILLYALTCCISGYVSSHFYRQIGGERWVWNIILTTSLFSVPFFLTWSVVNSVHWANGSTQALPATTILLLLTVWLLVGFPLTVIGGIFGKNNASPFDAPCRTKNIAREIPPQPWYKSTLVHMTVGGFLPFSAISVELYYIFATVWGREQYTLYGILFFVFAILLSVGACISIALTYFQLSGEDYRWWWRSVLSVGSTGLFIFLYSVFYYARRSNMSGTVQTVEFFGYSLLTGYVFFLMLGTISFFSSLKFIRYIYVNLKMD.

Positions 1–27 (MTVLGHPRSWSCRWWPLLLLLLLTGRE) are cleaved as a signal peptide. A glycan (N-linked (GlcNAc...) asparagine) is linked at N178. A run of 4 helical transmembrane segments spans residues 237–257 (LSIINSMVLVFLLVGFVAVIL), 310–330 (VLGVGAQFLALGTGIIVMALL), 339–359 (GAINSAAILLYALTCCISGYV), and 373–393 (VWNIILTTSLFSVPFFLTWSV). N401 is a glycosylation site (N-linked (GlcNAc...) asparagine). 4 helical membrane passes run 412–432 (ILLLLTVWLLVGFPLTVIGGI), 469–489 (VGGFLPFSAISVELYYIFATV), 499–519 (GILFFVFAILLSVGACISIAL), and 535–555 (SVLSVGSTGLFIFLYSVFYYA). N-linked (GlcNAc...) asparagine glycosylation is present at N559. Residues 570 to 590 (FGYSLLTGYVFFLMLGTISFF) form a helical membrane-spanning segment.

It belongs to the nonaspanin (TM9SF) (TC 9.A.2) family.

The protein localises to the lysosome membrane. The protein resides in the cytoplasmic vesicle. Its subcellular location is the autophagosome membrane. Functionally, plays an essential role in autophagy. The sequence is that of Transmembrane 9 superfamily member 1 (TM9SF1) from Bos taurus (Bovine).